Reading from the N-terminus, the 480-residue chain is Reticulophagy regulator 1 (480 aa).

The span at 1–10 (MASPAPEEHA) shows a compositional bias: basic and acidic residues. The disordered stretch occupies residues 1–41 (MASPAPEEHATQGCPATEEQEPRPGVPGEEAGPEGAGPQVE). Residues 1 to 43 (MASPAPEEHATQGCPATEEQEPRPGVPGEEAGPEGAGPQVEEA) are Cytoplasmic-facing. Residues 44-64 (AGRVAAALTWLLGEPVLWLGW) form a helical membrane-spanning segment. Over 65–78 (RADELLSWKRPLRS) the chain is Lumenal. The reticulon homology domain stretch occupies residues 67-216 (DELLSWKRPL…LLFAFLCPLF (150 aa)). A helical transmembrane segment spans residues 79 to 99 (LLAFLGANLLFWFLALTPWRV). Over 100–101 (YH) the chain is Cytoplasmic. A helical transmembrane segment spans residues 102–122 (LISVMILGRVIMQIIKDMVLS). Residues 123-191 (RARGAQLWRS…LVCSVCTFFT (69 aa)) lie on the Lumenal side of the membrane. Phosphoserine is present on Ser-132. The residue at position 134 (Ser-134) is a Phosphoserine; by CAMK2B. Phosphoserine is present on Ser-136. A helical transmembrane segment spans residues 192 to 212 (ILGSYIPGVILSYLLLLFAFL). Residues 213-480 (CPLFKCNDIG…GFLSNLLGGH (268 aa)) lie on the Cytoplasmic side of the membrane. The segment covering 302–313 (FNLSEGYTPQTD) has biased composition (polar residues). Residues 302–348 (FNLSEGYTPQTDTSDDLDRPSEEVFSRDLSDFPSLENGAGTNDEDEL) are disordered. The span at 317–331 (DLDRPSEEVFSRDLS) shows a compositional bias: basic and acidic residues. The LIR motif signature appears at 436-441 (DDFELL). A disordered region spans residues 450-480 (ESELGLTQDQGAEAQQSKKSSGFLSNLLGGH). Residues 454–473 (GLTQDQGAEAQQSKKSSGFL) show a composition bias toward polar residues.

The protein belongs to the RETREG family. In terms of assembly, homooligomer; oligomerization is enhanced following endoplasmic reticulum stress and is mediated by the reticulon homology domain. Interacts with ATG8 family modifier proteins MAP1LC3A, MAP1LC3B, GABARAP, GABARAPL1 and GABARAPL2. In terms of processing, phosphorylation at Ser-134 by CAMK2B enhances oligomerization and membrane scission and reticulophagy activity.

Its subcellular location is the golgi apparatus. It is found in the cis-Golgi network membrane. The protein resides in the endoplasmic reticulum membrane. Endoplasmic reticulum (ER)-anchored autophagy regulator which mediates ER delivery into lysosomes through sequestration into autophagosomes. Promotes membrane remodeling and ER scission via its membrane bending capacity and targets the fragments into autophagosomes via interaction with ATG8 family proteins. Active under basal conditions. Required for collagen quality control in a LIR motif-dependent manner. Required for long-term survival of nociceptive and autonomic ganglion neurons. This chain is Reticulophagy regulator 1, found in Rattus norvegicus (Rat).